We begin with the raw amino-acid sequence, 701 residues long: Protein UL29/UL28 (701 aa).

The interval 1–33 (MSGRRKGCSAATASSSSSSPPSRLPPLPGHARR) is disordered.

The protein belongs to the herpesviridae US22 family. As to quaternary structure, interacts with UL38 and host HDAC1; these interactions are necessary for the HDAC1 interaction with UL38. Interacts with host MTA2.

The protein localises to the virion. The protein resides in the host nucleus. It is found in the host cytoplasm. Its function is as follows. Contributes to activation of immediate-early gene expression. This is Protein UL29/UL28 (UL29) from Homo sapiens (Human).